The chain runs to 365 residues: Peptide chain release factor 2 (365 aa).

Glutamine 252 bears the N5-methylglutamine mark.

Belongs to the prokaryotic/mitochondrial release factor family. In terms of processing, methylated by PrmC. Methylation increases the termination efficiency of RF2.

Its subcellular location is the cytoplasm. In terms of biological role, peptide chain release factor 2 directs the termination of translation in response to the peptide chain termination codons UGA and UAA. This Escherichia coli (strain K12 / MC4100 / BW2952) protein is Peptide chain release factor 2.